A 776-amino-acid polypeptide reads, in one-letter code: Microtubule-associated protein tau (776 aa).

Residues 1-26 (MAEPRQEFEVMEDHAGTYGLGDRKDQ) are compositionally biased toward basic and acidic residues. 2 disordered regions span residues 1-263 (MAEP…PAKG) and 276-591 (STEI…LKNV). Alanine 2 is modified (N-acetylalanine). Phosphotyrosine occurs at positions 18 and 29. Residue lysine 44 forms a Glycyl lysine isopeptide (Lys-Gly) (interchain with G-Cter in ubiquitin) linkage. 2 positions are modified to phosphoserine: serine 46 and serine 61. Over residues 61–71 (SETSDAKSTPT) the composition is skewed to polar residues. Residues threonine 69, threonine 71, and threonine 111 each carry the phosphothreonine modification. Composition is skewed to basic and acidic residues over residues 179 to 189 (EGGRHAPELLK) and 207 to 216 (GGKERPGSKE). At serine 214 the chain carries Phosphoserine. Over residues 217-228 (EVDEDRDVDESS) the composition is skewed to acidic residues. Over residues 314-323 (EQAHSEEHLG) the composition is skewed to basic and acidic residues. A compositionally biased stretch (low complexity) spans 324 to 340 (RAAFPGAPGEGPEARGP). Composition is skewed to basic and acidic residues over residues 344–356 (EDTK…ESSE) and 381–393 (KSKD…DKKA). A compositionally biased stretch (polar residues) spans 440–452 (KYVSSVTPRTGSS). Residues 455–466 (KEMKLKGADGKT) are compositionally biased toward basic and acidic residues. Threonine 470 bears the Phosphothreonine mark. Omega-N-methylarginine is present on arginine 472. An N6,N6-dimethyllysine; alternate modification is found at lysine 480. Lysine 480 bears the N6-acetyllysine; alternate mark. Phosphothreonine occurs at positions 486, 492, and 498. Phosphoserine is present on residues serine 502, serine 526, and serine 530. A compositionally biased stretch (basic and acidic residues) spans 517–528 (RSERGEPPKSGD). Low complexity predominate over residues 529-549 (RSGYSSPGSPGTPGSRSRTPS). Tyrosine 532 is modified (phosphotyrosine). Phosphoserine is present on residues serine 533, serine 534, and serine 537. 2 positions are modified to phosphothreonine: threonine 540 and threonine 547. Position 549 is a phosphoserine (serine 549). Position 552 is a phosphothreonine (threonine 552). Lysine 560 is subject to N6-acetyllysine. Threonine 566 carries the post-translational modification Phosphothreonine. Phosphoserine is present on residues serine 570 and serine 572. Tau/MAP repeat units follow at residues 579–609 (QTAP…GGGK), 610–640 (VQII…GGGS), 641–671 (VQIV…GGGQ), and 672–703 (VEVK…GGGN). Lysine 589 participates in a covalent cross-link: Glycyl lysine isopeptide (Lys-Gly) (interchain with G-Cter in ubiquitin). At lysine 594 the chain carries N6-acetyllysine; alternate. Lysine 594 is subject to N6-methyllysine; alternate. A Glycyl lysine isopeptide (Lys-Gly) (interchain with G-Cter in ubiquitin); alternate cross-link involves residue lysine 594. Serine 597 is modified (phosphoserine). Lysine 602 is covalently cross-linked (Glycyl lysine isopeptide (Lys-Gly) (interchain with G-Cter in ubiquitin)). At lysine 616 the chain carries N6-acetyllysine; alternate. Lysine 616 participates in a covalent cross-link: Glycyl lysine isopeptide (Lys-Gly) (interchain with G-Cter in ubiquitin); alternate. Phosphoserine is present on residues serine 620 and serine 624. Lysine 625 carries the N6-acetyllysine modification. Phosphoserine is present on serine 628. Lysine 633 bears the N6-acetyllysine; alternate mark. Residue lysine 633 forms a Glycyl lysine isopeptide (Lys-Gly) (interchain with G-Cter in ubiquitin); alternate linkage. The residue at position 640 (serine 640) is a Phosphoserine. Lysine 646 carries the post-translational modification N6,N6-dimethyllysine; alternate. An N6-acetyllysine; alternate mark is found at lysine 646, lysine 652, and lysine 656. Glycyl lysine isopeptide (Lys-Gly) (interchain with G-Cter in ubiquitin); alternate cross-links involve residues lysine 646, lysine 652, and lysine 656. Serine 659 carries the post-translational modification Phosphoserine. N6-acetyllysine; alternate is present on residues lysine 666, lysine 678, and lysine 682. Glycyl lysine isopeptide (Lys-Gly) (interchain with G-Cter in ubiquitin); alternate cross-links involve residues lysine 666, lysine 678, and lysine 682. Omega-N-methylarginine is present on arginine 684. Serine 687 is modified (phosphoserine). Residue lysine 688 forms a Glycyl lysine isopeptide (Lys-Gly) (interchain with G-Cter in ubiquitin) linkage. Serine 691 carries the phosphoserine modification. The residue at position 704 (lysine 704) is an N6-acetyllysine; alternate. Lysine 704 participates in a covalent cross-link: Glycyl lysine isopeptide (Lys-Gly) (interchain with G-Cter in ubiquitin); alternate. A Glycyl lysine isopeptide (Lys-Gly) (interchain with G-Cter in ubiquitin) cross-link involves residue lysine 710. An N6-acetyllysine; alternate modification is found at lysine 720. A Glycyl lysine isopeptide (Lys-Gly) (interchain with G-Cter in ubiquitin); alternate cross-link involves residue lysine 720. Phosphotyrosine is present on tyrosine 729. A phosphoserine mark is found at serine 731 and serine 735. The interval 733–752 (VVSGDTSPRHLSNVSSTGSI) is disordered. The span at 736 to 751 (GDTSPRHLSNVSSTGS) shows a compositional bias: polar residues. Threonine 738 is subject to Phosphothreonine. A phosphoserine mark is found at serine 739, serine 744, serine 751, and serine 757. A Phosphothreonine modification is found at threonine 762.

Interacts with MARK1, MARK2, MARK3 and MARK4. Interacts with SQSTM1 when polyubiquitinated. Interacts with PSMC2 through SQSTM1. Interacts with FKBP4. Binds to CSNK1D. Interacts with SGK1. Interacts with EPM2A; the interaction dephosphorylates MAPT at Ser-396. Interacts with PIN1. Interacts with LRRK2. Interacts with LRP1, leading to endocytosis; this interaction is reduced in the presence of LRPAP1/RAP. In terms of processing, polyubiquitinated. Requires functional TRAF6 and may provoke SQSTM1-dependent degradation by the proteasome. Post-translationally, phosphorylation at various serine and threonine residues in S-P or T-P motifs by proline-directed protein kinases (PDPK1, CDK1, CDK5, GSK3, MAPK) (a few sites per protein in interphase, more in mitosis), and at serine residues in K-X-G-S motifs by MAP/microtubule affinity-regulating kinase (MARK1, MARK2, MARK3 or MARK4), causing detachment from microtubules, and their disassembly. Phosphorylation at Ser-597 by BRSK1 and BRSK2 in neurons affects ability to bind microtubules and plays a role in neuron polarization. Phosphorylation at Ser-214 by SGK1 mediates microtubule depolymerization and neurite formation in hippocampal neurons. Phosphorylated by PHK. Dephosphorylation at several serine and threonine residues by the serine/threonine phosphatase PPP5C.

The protein resides in the cytoplasm. It localises to the cytosol. The protein localises to the cell membrane. Its subcellular location is the cytoskeleton. It is found in the cell projection. The protein resides in the axon. It localises to the dendrite. Its function is as follows. Promotes microtubule assembly and stability, and might be involved in the establishment and maintenance of neuronal polarity. The C-terminus binds axonal microtubules while the N-terminus binds neural plasma membrane components, suggesting that tau functions as a linker protein between both. Axonal polarity is predetermined by tau localization (in the neuronal cell) in the domain of the cell body defined by the centrosome. The short isoforms allow plasticity of the cytoskeleton whereas the longer isoforms may preferentially play a role in its stabilization. The protein is Microtubule-associated protein tau (MAPT) of Gorilla gorilla gorilla (Western lowland gorilla).